The sequence spans 113 residues: Retrotransposon Gag-like protein 8A (113 aa).

This sequence belongs to the FAM127 family.

The chain is Retrotransposon Gag-like protein 8A from Homo sapiens (Human).